Here is a 252-residue protein sequence, read N- to C-terminus: ATP synthase subunit a (252 aa).

5 consecutive transmembrane segments (helical) span residues 33 to 53 (GQVFITTWIVMGILIVAALAA), 92 to 112 (VPFVGTLFLFIFVCNWSGALV), 130 to 150 (DINTTVALALLVSLAYFYAGL), 196 to 216 (LVVGVLVLLVPLFVPLPVMAL), and 217 to 237 (GLFTSAIQALVFATLAATYIG).

It belongs to the ATPase A chain family. F-type ATPases have 2 components, CF(1) - the catalytic core - and CF(0) - the membrane proton channel. CF(1) has five subunits: alpha(3), beta(3), gamma(1), delta(1), epsilon(1). CF(0) has three main subunits: a(1), b(2) and c(9-12). The alpha and beta chains form an alternating ring which encloses part of the gamma chain. CF(1) is attached to CF(0) by a central stalk formed by the gamma and epsilon chains, while a peripheral stalk is formed by the delta and b chains.

The protein resides in the cellular thylakoid membrane. Functionally, key component of the proton channel; it plays a direct role in the translocation of protons across the membrane. The polypeptide is ATP synthase subunit a (Synechococcus sp. (strain PCC 6716)).